Reading from the N-terminus, the 217-residue chain is tRNA (guanine-N(7)-)-methyltransferase (217 aa).

S-adenosyl-L-methionine is bound by residues Glu-44, Glu-69, Asp-96, and Asp-118. The active site involves Asp-118. Substrate contacts are provided by residues Lys-122, Asp-154, and 191–194 (TEYE).

This sequence belongs to the class I-like SAM-binding methyltransferase superfamily. TrmB family.

It carries out the reaction guanosine(46) in tRNA + S-adenosyl-L-methionine = N(7)-methylguanosine(46) in tRNA + S-adenosyl-L-homocysteine. It participates in tRNA modification; N(7)-methylguanine-tRNA biosynthesis. Functionally, catalyzes the formation of N(7)-methylguanine at position 46 (m7G46) in tRNA. This chain is tRNA (guanine-N(7)-)-methyltransferase, found in Bacillus cereus (strain B4264).